The sequence spans 302 residues: AT-hook motif nuclear-localized protein 29 (302 aa).

The disordered stretch occupies residues 1–95; sequence MDGGYDQSGG…KPPVIVTRDS (95 aa). Pro residues predominate over residues 32 to 44; that stretch reads QLHPLPQPQPQPQ. A DNA-binding region (a.T hook) is located at residues 72–84; that stretch reads KRPRGRPPGSKNK. Residues 96–241 enclose the PPC domain; the sequence is PNVLRSHVLE…DEGGEGGEGG (146 aa). Residues 164-169 are required for the binding to non-AHL interactors; sequence GRFEIL. Residues 229 to 279 are disordered; it reads PLEDEGGEGGEGGEVGEGGGGEGGPPPATSSSPPSGAGQGQLRGNMSGYDQ. The span at 237 to 251 shows a compositional bias: gly residues; that stretch reads GGEGGEVGEGGGGEG.

In terms of assembly, homodimer. Interacts with AHL5, AHL12, AHL25, AHL27, TCP4, TCP13 and EF114. Expressed in the hypocotyl and the vascular tissue of seedling.

Its subcellular location is the nucleus. Transcription factor that specifically binds AT-rich DNA sequences related to the nuclear matrix attachment regions (MARs). Acts redundantly with AHL18, AHL22 and AHL27 in the regulation of flowering and regulation of the hypocotyl elongation. Acts redundantly with AHL27/ESC to modulate hypocotyl growth inhibition in response to light. The protein is AT-hook motif nuclear-localized protein 29 of Arabidopsis thaliana (Mouse-ear cress).